The sequence spans 330 residues: Ribosomal RNA small subunit methyltransferase C (330 aa).

Belongs to the methyltransferase superfamily. RsmC family. Monomer.

It localises to the cytoplasm. It catalyses the reaction guanosine(1207) in 16S rRNA + S-adenosyl-L-methionine = N(2)-methylguanosine(1207) in 16S rRNA + S-adenosyl-L-homocysteine + H(+). Its function is as follows. Specifically methylates the guanine in position 1207 of 16S rRNA in the 30S particle. The chain is Ribosomal RNA small subunit methyltransferase C from Haemophilus influenzae (strain 86-028NP).